Reading from the N-terminus, the 421-residue chain is Medium-chain specific acyl-CoA dehydrogenase, mitochondrial (421 aa).

Residues 1-25 (MAAGFGRCCRVLRSISRFQWRSQHT) constitute a mitochondrion transit peptide. The residue at position 69 (Lys69) is an N6-acetyllysine; alternate. Lys69 carries the N6-succinyllysine; alternate modification. 158–167 (YCVTEPGAGS) contributes to the FAD binding site. Ser167 lines the octanoyl-CoA pocket. Lys179 bears the N6-succinyllysine mark. 191–193 (WIT) lines the FAD pocket. Residues Lys212, Lys217, and Lys271 each carry the N6-acetyllysine; alternate modification. An N6-succinyllysine; alternate mark is found at Lys212, Lys217, and Lys271. Asp278 contacts octanoyl-CoA. Lys279 is modified (N6-acetyllysine). Residue Arg281 participates in octanoyl-CoA binding. Residue Lys301 is modified to N6-acetyllysine. FAD contacts are provided by residues 306–308 (RKT) and 316–317 (HQ). Positions 349 and 351 each coordinate octanoyl-CoA. At Thr351 the chain carries Phosphothreonine. 374-378 (QILGG) provides a ligand contact to FAD. Glu401 contacts octanoyl-CoA. Glu401 acts as the Proton acceptor in catalysis. Residue 402–405 (GTSQ) coordinates FAD.

The protein belongs to the acyl-CoA dehydrogenase family. Homotetramer. Interacts with the heterodimeric electron transfer flavoprotein ETF. FAD serves as cofactor. Post-translationally, acetylated. Could occur at proximity of the cofactor-binding sites and reduce the catalytic activity. Could be deacetylated by SIRT3.

It is found in the mitochondrion matrix. The enzyme catalyses a medium-chain 2,3-saturated fatty acyl-CoA + oxidized [electron-transfer flavoprotein] + H(+) = a medium-chain (2E)-enoyl-CoA + reduced [electron-transfer flavoprotein]. It carries out the reaction pentanoyl-CoA + oxidized [electron-transfer flavoprotein] + H(+) = (2E)-pentenoyl-CoA + reduced [electron-transfer flavoprotein]. The catalysed reaction is hexanoyl-CoA + oxidized [electron-transfer flavoprotein] + H(+) = (2E)-hexenoyl-CoA + reduced [electron-transfer flavoprotein]. It catalyses the reaction octanoyl-CoA + oxidized [electron-transfer flavoprotein] + H(+) = (2E)-octenoyl-CoA + reduced [electron-transfer flavoprotein]. The enzyme catalyses decanoyl-CoA + oxidized [electron-transfer flavoprotein] + H(+) = (2E)-decenoyl-CoA + reduced [electron-transfer flavoprotein]. It carries out the reaction dodecanoyl-CoA + oxidized [electron-transfer flavoprotein] + H(+) = (2E)-dodecenoyl-CoA + reduced [electron-transfer flavoprotein]. The catalysed reaction is tetradecanoyl-CoA + oxidized [electron-transfer flavoprotein] + H(+) = (2E)-tetradecenoyl-CoA + reduced [electron-transfer flavoprotein]. It catalyses the reaction oxidized [electron-transfer flavoprotein] + hexadecanoyl-CoA + H(+) = (2E)-hexadecenoyl-CoA + reduced [electron-transfer flavoprotein]. The protein operates within lipid metabolism; mitochondrial fatty acid beta-oxidation. Medium-chain specific acyl-CoA dehydrogenase is one of the acyl-CoA dehydrogenases that catalyze the first step of mitochondrial fatty acid beta-oxidation, an aerobic process breaking down fatty acids into acetyl-CoA and allowing the production of energy from fats. The first step of fatty acid beta-oxidation consists in the removal of one hydrogen from C-2 and C-3 of the straight-chain fatty acyl-CoA thioester, resulting in the formation of trans-2-enoyl-CoA. Electron transfer flavoprotein (ETF) is the electron acceptor that transfers electrons to the main mitochondrial respiratory chain via ETF-ubiquinone oxidoreductase (ETF dehydrogenase). Among the different mitochondrial acyl-CoA dehydrogenases, medium-chain specific acyl-CoA dehydrogenase acts specifically on acyl-CoAs with saturated 6 to 12 carbons long primary chains. The polypeptide is Medium-chain specific acyl-CoA dehydrogenase, mitochondrial (Pan troglodytes (Chimpanzee)).